Reading from the N-terminus, the 743-residue chain is Polyribonucleotide nucleotidyltransferase (743 aa).

Positions 489 and 495 each coordinate Mg(2+). Positions 556 to 618 constitute a KH domain; that stretch reads PRIEKMHIGK…PCIDAAIGMI (63 aa). One can recognise an S1 motif domain in the interval 628–698; sequence GETYPGKITS…KTGKFKLSRK (71 aa). A disordered region spans residues 704 to 743; sequence PEGYVEPQPRERRERREGGREGGRNFERRGGDRDHREPRG.

This sequence belongs to the polyribonucleotide nucleotidyltransferase family. The cofactor is Mg(2+).

The protein resides in the cytoplasm. It carries out the reaction RNA(n+1) + phosphate = RNA(n) + a ribonucleoside 5'-diphosphate. Functionally, involved in mRNA degradation. Catalyzes the phosphorolysis of single-stranded polyribonucleotides processively in the 3'- to 5'-direction. This chain is Polyribonucleotide nucleotidyltransferase, found in Porphyromonas gingivalis (strain ATCC BAA-308 / W83).